The sequence spans 495 residues: ATP-NADH kinase YEF1 (495 aa).

The disordered stretch occupies residues lysine 442–glutamate 480. Residues serine 448–aspartate 467 are compositionally biased toward polar residues.

This sequence belongs to the NAD kinase family. As to quaternary structure, homooctamer. Requires Mg(2+) as cofactor. It depends on Mn(2+) as a cofactor. The cofactor is Co(2+). Ca(2+) serves as cofactor.

The enzyme catalyses NADH + ATP = ADP + NADPH + H(+). ATP-NADH kinase with a low phosphorylation activity of both NADH and NAD(+) to produce NADP and NADPH by using ATP. UTR1 is responsible for essentially all of the NAD/NADH kinase activity resident in the cytoplasm, whereas POS5 is responsible for all mitochondrial NAD/NADH kinase activity and consequent mitochondrial genome maintenance. YEF1 can substitute for UTR1 when overexpressed. The protein is ATP-NADH kinase YEF1 (YEF1) of Saccharomyces cerevisiae (strain ATCC 204508 / S288c) (Baker's yeast).